Consider the following 120-residue polypeptide: Large ribosomal subunit protein bL17 (120 aa).

Belongs to the bacterial ribosomal protein bL17 family. As to quaternary structure, part of the 50S ribosomal subunit. Contacts protein L32.

In Mycoplasmopsis synoviae (strain 53) (Mycoplasma synoviae), this protein is Large ribosomal subunit protein bL17.